Here is a 68-residue protein sequence, read N- to C-terminus: uncharacterized protein (68 aa).

The signal sequence occupies residues 1–28 (MNKEQSADDPSVDLIRVKNMLNSTISMS).

This is an uncharacterized protein from Escherichia coli (strain K12).